The primary structure comprises 803 residues: MIPVTEFRQFSEQQPAFRVLKPWWDVFTDYLSVAMLMIGVFGCTLQVMQDKIICLPKRVQPAQNHSSLSNVSQTVINTTPLPPPKPSPTNPATVEMKGLKTDLDLQQYSFINQMCYERALHWYAKYFPYLVLIHTLVFMLCSNFWFKFPGSSSKIEHFISILGKCFDSPWTTRALSEVSGEDSEEKDNRKNNMNRSNTIQSGPEGSLVKSQSLKSIPEKFVVDKSTAGALDKKEGEQAKALFEKVKKFRLHVEEGDILYAMYVRQTVLKVIKFLIIIAYNSALVSKVQFTVDCNVDIQDMTGYKNFSCNHTMAHLFSKLSFCYLCFVSIYGLTCLYTLYWLFYRSLREYSFEYVRQETGIDDIPDVKNDFAFMLHMIDQYDPLYSKRFAVFLSEVSENKLKQLNLNNEWTPDKLRQKLQTNAHNRLELPLIMLSGLPDTVFEITELQSLKLEIIKNVMIPATIAQLDNLQELSLHQCSVKIHSAALSFLKENLKVLSVKFDDMRELPPWMYGLRNLEELYLVGSLSHDISKNVTLESLRDLKSLKILSIKSNVSKIPQAVVDVSSHLQKMCIHNDGTKLVMLNNLKKMTNLTELELVHCDLERIPHAVFSLLSLQELDLKENNLKSIEEIVSFQHLRKLTVLKLWYNSIAYIPEHIKKLTSLERLFFSHNKVEVLPSHLFLCNKIRYLDLSYNDIRFIPPEIGVLQSLQYFSITCNKVESLPDELYFCKKLKTLKIGKNSLSVLSPKIGNLLFLSYLDIKGNHFEVLPPELGDCRALKRAGLVVEDALFETLPSDVREQMKAD.

Residues 1 to 22 (MIPVTEFRQFSEQQPAFRVLKP) are Cytoplasmic-facing. A helical transmembrane segment spans residues 23 to 43 (WWDVFTDYLSVAMLMIGVFGC). The Extracellular portion of the chain corresponds to 44–125 (TLQVMQDKII…YERALHWYAK (82 aa)). 2 disulfides stabilise this stretch: cysteine 54–cysteine 308 and cysteine 115–cysteine 293. N-linked (GlcNAc...) asparagine glycans are attached at residues asparagine 64 and asparagine 70. A helical transmembrane segment spans residues 126–146 (YFPYLVLIHTLVFMLCSNFWF). The Cytoplasmic segment spans residues 147 to 266 (KFPGSSSKIE…ILYAMYVRQT (120 aa)). The segment at 177–211 (EVSGEDSEEKDNRKNNMNRSNTIQSGPEGSLVKSQ) is disordered. The segment covering 191 to 211 (NNMNRSNTIQSGPEGSLVKSQ) has biased composition (polar residues). Residues serine 212 and serine 215 each carry the phosphoserine modification. A helical transmembrane segment spans residues 267-287 (VLKVIKFLIIIAYNSALVSKV). The Extracellular portion of the chain corresponds to 288–320 (QFTVDCNVDIQDMTGYKNFSCNHTMAHLFSKLS). A helical membrane pass occupies residues 321–341 (FCYLCFVSIYGLTCLYTLYWL). At 342–803 (FYRSLREYSF…SDVREQMKAD (462 aa)) the chain is on the cytoplasmic side. LRR repeat units lie at residues 397 to 420 (ENKLKQLNLNNEWTPDKLRQKLQT), 421 to 443 (NAHNRLELPLIMLSGLPDTVFEI), 446 to 466 (LQSLKLEIIKNVMIPATIAQL), 467 to 488 (DNLQELSLHQCSVKIHSAALSF), 490 to 513 (KENLKVLSVKFDDMRELPPWMYGL), 515 to 537 (NLEELYLVGSLSHDISKNVTLES), 541 to 563 (LKSLKILSIKSNVSKIPQAVVDV), 565 to 587 (SHLQKMCIHNDGTKLVMLNNLKK), 588 to 611 (MTNLTELELVHCDLERIPHAVFSL), 613 to 635 (SLQELDLKENNLKSIEEIVSFQH), 637 to 659 (RKLTVLKLWYNSIAYIPEHIKKL), 660 to 682 (TSLERLFFSHNKVEVLPSHLFLC), 684 to 705 (KIRYLDLSYNDIRFIPPEIGVL), 706 to 728 (QSLQYFSITCNKVESLPDELYFC), 730 to 751 (KLKTLKIGKNSLSVLSPKIGNL), 752 to 774 (LFLSYLDIKGNHFEVLPPELGDC), and 776 to 799 (ALKRAGLVVEDALFETLPSDVREQ).

This sequence belongs to the LRRC8 family. As to quaternary structure, heterohexamer; oligomerizes with other LRRC8 proteins (LRRC8A, LRRC8B, LRRC8D and/or LRRC8E) to form a heterohexamer. Homoheptamer; inactive, likely because it is not targeted to the plasma membrane in the absence of LRRC8A. In vivo, the subunit composition may depend primarily on expression levels, and heterooligomeric channels containing various proportions of the different LRRC8 proteins may coexist.

Its subcellular location is the cell membrane. It localises to the endoplasmic reticulum membrane. It carries out the reaction chloride(in) = chloride(out). It catalyses the reaction iodide(out) = iodide(in). The catalysed reaction is taurine(out) = taurine(in). The enzyme catalyses 2',3'-cGAMP(out) = 2',3'-cGAMP(in). Functionally, non-essential component of the volume-regulated anion channel (VRAC, also named VSOAC channel), an anion channel required to maintain a constant cell volume in response to extracellular or intracellular osmotic changes. The VRAC channel conducts iodide better than chloride and can also conduct organic osmolytes like taurine. Plays a redundant role in the efflux of amino acids, such as aspartate and glutamate, in response to osmotic stress. The VRAC channel also mediates transport of immunoreactive cyclic dinucleotide GMP-AMP (2'-3'-cGAMP), an immune messenger produced in response to DNA virus in the cytosol. Channel activity requires LRRC8A plus at least one other family member (LRRC8B, LRRC8C, LRRC8D or LRRC8E); channel characteristics depend on the precise subunit composition. This chain is Volume-regulated anion channel subunit LRRC8C, found in Rattus norvegicus (Rat).